Here is a 43-residue protein sequence, read N- to C-terminus: Putative inhibitor of glucose uptake transporter SgrT (43 aa).

In terms of biological role, acts to promote recovery from glucose-phosphate stress due to intracellular accumulation of glucose-6-phosphate caused by disruption of glycolytic flux or in the presence of (toxic) non-metabolizable glucose phosphate analogs. It may do so by inhibiting the transporter activity for glucose uptake (PtsG) as cells that overexpress this protein do not seem to import glucose although they have nearly wild-type levels of PtsG. In Escherichia coli (strain K12), this protein is Putative inhibitor of glucose uptake transporter SgrT (sgrT).